Here is a 338-residue protein sequence, read N- to C-terminus: Phenylalanine--tRNA ligase alpha subunit (338 aa).

Glu-252 contributes to the Mg(2+) binding site.

Belongs to the class-II aminoacyl-tRNA synthetase family. Phe-tRNA synthetase alpha subunit type 1 subfamily. In terms of assembly, tetramer of two alpha and two beta subunits. It depends on Mg(2+) as a cofactor.

It localises to the cytoplasm. It carries out the reaction tRNA(Phe) + L-phenylalanine + ATP = L-phenylalanyl-tRNA(Phe) + AMP + diphosphate + H(+). This chain is Phenylalanine--tRNA ligase alpha subunit, found in Pseudomonas paraeruginosa (strain DSM 24068 / PA7) (Pseudomonas aeruginosa (strain PA7)).